We begin with the raw amino-acid sequence, 240 residues long: Type II restriction enzyme DdeI (240 aa).

The enzyme catalyses Endonucleolytic cleavage of DNA to give specific double-stranded fragments with terminal 5'-phosphates.. In terms of biological role, a P subtype restriction enzyme that recognizes the double-stranded sequence 5'-CTNAG-3' and cleaves after C-1. This is Type II restriction enzyme DdeI (ddeIR) from Desulfomicrobium norvegicum (strain DSM 1741 / NCIMB 8310) (Desulfovibrio baculatus (strain Norway 4)).